A 229-amino-acid chain; its full sequence is MSVRPVVITIDGPSGSGKGTVAGLLAKRLGWNLLDSGALYRLLAFAARNHGVDLTNEEALKVLAAHLDVQFVTSTDLHPQQIILEGEDVTDAIRNEQVGAGASQVASLPAVREALLQRQHAFLEPPGLVADGRDMGTVVFPDAPLKVFLTARAEERARRRYQQLKESGVDANLSSLLGEISKRDERDSQRAVAPLKAAPDAIQLDSTELTIEQVVERIMSEIAARDLAG.

Residue 12-20 participates in ATP binding; sequence GPSGSGKGT.

The protein belongs to the cytidylate kinase family. Type 1 subfamily.

Its subcellular location is the cytoplasm. It catalyses the reaction CMP + ATP = CDP + ADP. The enzyme catalyses dCMP + ATP = dCDP + ADP. This is Cytidylate kinase from Azotobacter vinelandii (strain DJ / ATCC BAA-1303).